The chain runs to 87 residues: Large ribosomal subunit protein bL27 (87 aa).

The tract at residues 1 to 21 is disordered; that stretch reads MAHKKGQGSTQNNRDSAGRRL.

This sequence belongs to the bacterial ribosomal protein bL27 family.

The sequence is that of Large ribosomal subunit protein bL27 from Nautilia profundicola (strain ATCC BAA-1463 / DSM 18972 / AmH).